We begin with the raw amino-acid sequence, 149 residues long: Transcriptional repressor NrdR (149 aa).

The segment at 3–34 (CPYCSYEESKVVDSRSAEDYNAIRRRRECLRC) is a zinc-finger region. Residues 49–139 (ILVIKKDLSR…VYRQFKDINT (91 aa)) form the ATP-cone domain.

Belongs to the NrdR family. It depends on Zn(2+) as a cofactor.

Functionally, negatively regulates transcription of bacterial ribonucleotide reductase nrd genes and operons by binding to NrdR-boxes. The polypeptide is Transcriptional repressor NrdR (Clostridium perfringens (strain SM101 / Type A)).